The sequence spans 421 residues: MREIINKLNPIIIDKADKKFGVSRILKKYDGKPVYIKDVNGFEVVGNLCSRETLSKIFNVKKEDFIFFMLDAMEKEKEGKLKINNKLKEKYIVEIPENIKNWPIPIYYEKDAGAYITSGVVVVYDKDYGYNLSIHRILVKDDYLVIRMVEQRHLHFLYNKALKEKGYLDVAIVIGVHPAVLLAGSTSADITFDELKFAAALLGGEIGVFELDNGLLVPEAEFIIEGKILPEVDDEGPFVDITGTYDIVRKQPIIKIEKLYRKEKPIFHALLPGGIEHKTLMGMPQEPRILKGVRNTVPTVKNIVLTEGGCCWLHAVVQIEKRTEGDGKNAILAAFASHPSLKHVIVVDDDINIFDINDVEYAIATRVQGDKDIVIISGAKGSSLDPSSDLKNKLTAKVGVDATMSLIKGREHFERAKIPDK.

Positions 131 and 194 each coordinate Mn(2+). The Proton acceptor role is filled by Asp-240.

This sequence belongs to the UbiD family. Prenylated FMN is required as a cofactor. It depends on Mn(2+) as a cofactor.

The catalysed reaction is (2E)-3-methyl-5-phosphooxypent-2-enoate + H(+) = isopentenyl phosphate + CO2. It functions in the pathway isoprenoid biosynthesis; isopentenyl diphosphate biosynthesis via mevalonate pathway. In terms of biological role, catalyzes the conversion of trans-anhydromevalonate 5-phosphate (tAHMP) into isopentenyl phosphate. Involved in the archaeal mevalonate (MVA) pathway, which provides fundamental precursors for isoprenoid biosynthesis, such as isopentenyl diphosphate (IPP) and dimethylallyl diphosphate (DMAPP). The sequence is that of Anhydromevalonate phosphate decarboxylase from Methanocaldococcus jannaschii (strain ATCC 43067 / DSM 2661 / JAL-1 / JCM 10045 / NBRC 100440) (Methanococcus jannaschii).